A 91-amino-acid polypeptide reads, in one-letter code: MARPTGKKFDKRRQQQNPLFKRKKFCRFTAAGVEQIDYKDTETLKDFIGENGKITPARLTGTKAHYQRQLDTAIKRARFLALLPYTDQHKA.

Belongs to the bacterial ribosomal protein bS18 family. Part of the 30S ribosomal subunit. Forms a tight heterodimer with protein bS6.

Binds as a heterodimer with protein bS6 to the central domain of the 16S rRNA, where it helps stabilize the platform of the 30S subunit. In Burkholderia multivorans (strain ATCC 17616 / 249), this protein is Small ribosomal subunit protein bS18.